A 321-amino-acid chain; its full sequence is Torsin-2A (321 aa).

The N-terminal stretch at 1-26 (MAVARHGYRPWGSILGLLGLALAAAA) is a signal peptide. Position 93–100 (93–100 (GWTGTGKS)) interacts with ATP. Asn-149 carries N-linked (GlcNAc...) asparagine glycosylation.

Belongs to the ClpA/ClpB family. Torsin subfamily. As to quaternary structure, homohexamer. Interacts with TOR1AIP1. Post-translationally, N-glycosylated. In terms of tissue distribution, expressed at similar levels in liver, muscle and brain (at protein level).

The protein localises to the endoplasmic reticulum lumen. This Mus musculus (Mouse) protein is Torsin-2A (Tor2a).